The following is a 236-amino-acid chain: MSEAPRAETFVFLDLEATGLPSVEPEIAELSLFAVHRSSLENPEHDESGALVLPRVLDKLTLCMCPERPFTAKASEITGLSSEGLARCRKAGFDGAVVRTLQAFLSRQAGPICLVAHNGFDYDFPLLCAELRRLGARLPRDTVCLDTLPALRGLDRAHSHGTRARGRQGYSLGSLFHRYFRAEPSAAHSAEGDVHTLLLIFLHRAAELLAWADEQARGWAHIEPMYLPPDDPSLEA.

2 residues coordinate Mg(2+): Asp-14 and Glu-16. Residues 16–17 (EA) and Tyr-122 contribute to the substrate site. His-188 acts as the Proton donor/acceptor in catalysis. Asp-193 contributes to the Mg(2+) binding site. Substrate is bound at residue Asp-193.

The protein belongs to the exonuclease superfamily. TREX family. In terms of assembly, homodimer. Requires Mg(2+) as cofactor. Detected in heart, breast, prostate, skeletal muscle, testis, uterus, bone marrow, colon, small intestine, stomach and thymus.

The protein localises to the nucleus. The enzyme catalyses Exonucleolytic cleavage in the 3'- to 5'-direction to yield nucleoside 5'-phosphates.. Its function is as follows. Exonuclease with a preference for double-stranded DNA with mismatched 3' termini. May play a role in DNA repair. This chain is Three prime repair exonuclease 2 (TREX2), found in Homo sapiens (Human).